The sequence spans 436 residues: 3-ketoacyl-CoA thiolase (436 aa).

The active-site Acyl-thioester intermediate is Cys-99. Active-site proton acceptor residues include His-392 and Cys-422.

It belongs to the thiolase-like superfamily. Thiolase family. In terms of assembly, heterotetramer of two alpha chains (FadJ) and two beta chains (FadI).

The protein localises to the cytoplasm. The enzyme catalyses an acyl-CoA + acetyl-CoA = a 3-oxoacyl-CoA + CoA. It participates in lipid metabolism; fatty acid beta-oxidation. In terms of biological role, catalyzes the final step of fatty acid oxidation in which acetyl-CoA is released and the CoA ester of a fatty acid two carbons shorter is formed. This Escherichia fergusonii (strain ATCC 35469 / DSM 13698 / CCUG 18766 / IAM 14443 / JCM 21226 / LMG 7866 / NBRC 102419 / NCTC 12128 / CDC 0568-73) protein is 3-ketoacyl-CoA thiolase.